The sequence spans 396 residues: Probable sugar efflux transporter (396 aa).

A run of 12 helical transmembrane segments spans residues 15 to 35, 50 to 70, 81 to 101, 103 to 123, 136 to 156, 170 to 190, 209 to 229, 246 to 266, 275 to 295, 299 to 319, 333 to 353, and 364 to 384; these read VVTL…PVGL, VGIM…PFML, LICL…SWSF, VLVI…SITA, AQAL…GLPL, FFAI…LLPL, PALM…YTAY, FATA…VIFG, ALVS…LPAA, IHLG…GLGM, VAMA…ALVG, and MIGY…IIIF.

This sequence belongs to the major facilitator superfamily. SotB (TC 2.A.1.2) family.

The protein localises to the cell inner membrane. In terms of biological role, involved in the efflux of sugars. The physiological role may be the reduction of the intracellular concentration of toxic sugars or sugar metabolites. This is Probable sugar efflux transporter from Escherichia coli O17:K52:H18 (strain UMN026 / ExPEC).